Consider the following 381-residue polypeptide: MRTAVASPAALDSGRQEPLRVMVVDDSVVIRGLISRWIEAEPDMVVAASLRTGLDAVNQVERANPDVVVLDIEMPELDGISALPQLLAKKRNLIVIMASTLTRRNAEISFKALSLGAADYIPKPESTREIAAADIFKHDLIQKIRHLAAKRRRPAALASAREPEPRPIQATPVPAHSAPVLRPFSTHAPRALLIGSSTGGPQALMTLVAGIGPVIDRYPVLITQHMPPTFTTILAEHLARAAGRPAHEGVDEEIVKPGHIYLATGGRHMRLARKGTGAVIVLDDGPAVNFCKPAVDPLFTSAIDVWQGGILAVILTGMGSDGMRGGQQIVAAGGNVIAQDEASSVVWGMPGAAAQAGICAAVLPLQQIAPKLVRLFAGDHS.

One can recognise a Response regulatory domain in the interval 20 to 138; it reads RVMVVDDSVV…EIAAADIFKH (119 aa). Position 71 is a 4-aspartylphosphate (Asp71). The interval 154-176 is disordered; the sequence is PAALASAREPEPRPIQATPVPAH. The 191-residue stretch at 183–373 folds into the CheB-type methylesterase domain; sequence PFSTHAPRAL…PLQQIAPKLV (191 aa). Catalysis depends on residues Ser197, His225, and Asp321.

Belongs to the CheB family. Phosphorylated by CheA. Phosphorylation of the N-terminal regulatory domain activates the methylesterase activity.

The protein localises to the cytoplasm. It carries out the reaction [protein]-L-glutamate 5-O-methyl ester + H2O = L-glutamyl-[protein] + methanol + H(+). The catalysed reaction is L-glutaminyl-[protein] + H2O = L-glutamyl-[protein] + NH4(+). In terms of biological role, involved in chemotaxis. Part of a chemotaxis signal transduction system that modulates chemotaxis in response to various stimuli. Catalyzes the demethylation of specific methylglutamate residues introduced into the chemoreceptors (methyl-accepting chemotaxis proteins or MCP) by CheR. Also mediates the irreversible deamidation of specific glutamine residues to glutamic acid. This is Protein-glutamate methylesterase/protein-glutamine glutaminase from Nitrobacter hamburgensis (strain DSM 10229 / NCIMB 13809 / X14).